Reading from the N-terminus, the 58-residue chain is MDTQKDVQPPKQQPMIYICGECHTENEIKSRDPIRCRECGYRIMYKKRTKRLVVFDAR.

4 residues coordinate Zn(2+): C19, C22, C36, and C39. The C4-type zinc finger occupies 19–39 (CGECHTENEIKSRDPIRCREC).

The protein belongs to the archaeal Rpo12/eukaryotic RPC10 RNA polymerase subunit family. In terms of assembly, component of the RNA polymerase I (Pol I), RNA polymerase II (Pol II) and RNA polymerase III (Pol III) complexes consisting of at least 13, 12 and 17 subunits, respectively. Pol I complex consists of a ten-subunit catalytic core composed of POLR1A/RPA1, POLR1B/RPA2, POLR1C/RPAC1, POLR1D/RPAC2, POLR1H/RPA12, POLR2E/RPABC1, POLR2F/RPABC2, POLR2H/RPABC3, POLR2K/RPABC4 and POLR2L/RPABC5; a mobile stalk subunit POLR1F/RPA43 protruding from the core and additional subunits homologous to general transcription factors POLR1E/RPA49 and POLR1G/RPA34. Part of Pol I pre-initiation complex (PIC), in which Pol I core assembles with RRN3 and promoter-bound UTBF and SL1/TIF-IB complex. Pol II complex contains a ten-subunit catalytic core composed of POLR2A/RPB1, POLR2B/RPB2, POLR2C/RPB3, POLR2I/RPB9, POLR2J/RPB11, POLR2E/RPABC1, POLR2F/RPABC2, POLR2H/RPABC3, POLR2K/RPABC4 and POLR2L/RPABC5 and a mobile stalk composed of two subunits POLR2D/RPB4 and POLR2G/RPB7. Part of Pol II(G) complex, in which Pol II core associates with an additional subunit POLR2M; unlike conventional Pol II, Pol II(G) functions as a transcriptional repressor. Part of TBP-based Pol II pre-initiation complex (PIC), in which Pol II core assembles with general transcription factors and other specific initiation factors including GTF2E1, GTF2E2, GTF2F1, GTF2F2, TCEA1, ERCC2, ERCC3, GTF2H2, GTF2H3, GTF2H4, GTF2H5, GTF2A1, GTF2A2, GTF2B and TBP; this large multi-subunit PIC complex mediates DNA unwinding and targets Pol II core to the transcription start site where the first phosphodiester bond forms. Pol III complex consists of a ten-subunit catalytic core composed of POLR3A/RPC1, POLR3B/RPC2, POLR1C/RPAC1, POLR1D/RPAC2, POLR3K/RPC10, POLR2E/RPABC1, POLR2F/RPABC2, POLR2H/RPABC3, POLR2K/RPABC4 and POLR2L/RPABC5; a mobile stalk composed of two subunits POLR3H/RPC8 and CRCP/RPC9, protruding from the core and functioning primarily in transcription initiation; and additional subunits homologous to general transcription factors of the RNA polymerase II machinery, POLR3C/RPC3-POLR3F/RPC6-POLR3G/RPC7 heterotrimer required for transcription initiation and POLR3D/RPC4-POLR3E/RPC5 heterodimer involved in both transcription initiation and termination.

The protein localises to the nucleus. Its subcellular location is the nucleolus. DNA-dependent RNA polymerase catalyzes the transcription of DNA into RNA using the four ribonucleoside triphosphates as substrates. Common component of RNA polymerases I, II and III which synthesize ribosomal RNA precursors, mRNA precursors and many functional non-coding RNAs, and a small RNAs, such as 5S rRNA and tRNAs, respectively. This chain is DNA-directed RNA polymerases I, II, and III subunit RPABC4 (POLR2K), found in Bos taurus (Bovine).